The sequence spans 198 residues: Ribosomal RNA small subunit methyltransferase G (198 aa).

S-adenosyl-L-methionine-binding positions include glycine 74, phenylalanine 79, 123–124, and arginine 136; that span reads IQ.

Belongs to the methyltransferase superfamily. RNA methyltransferase RsmG family.

The protein resides in the cytoplasm. It carries out the reaction guanosine(527) in 16S rRNA + S-adenosyl-L-methionine = N(7)-methylguanosine(527) in 16S rRNA + S-adenosyl-L-homocysteine. Its function is as follows. Specifically methylates the N7 position of guanine in position 527 of 16S rRNA. This Orientia tsutsugamushi (strain Boryong) (Rickettsia tsutsugamushi) protein is Ribosomal RNA small subunit methyltransferase G.